We begin with the raw amino-acid sequence, 340 residues long: Guanine nucleotide-binding protein subunit beta-1 (340 aa).

Ser29 carries the post-translational modification Phosphoserine. WD repeat units lie at residues 53–92 (GHLAKIYAMHWGNDSRNLVSASQDGKLIVWDSHTTNKVHA), 95–134 (LRSSWVMTCAYAPSGSYVACGGLDNMCSIYNLKTREGNVR), 141–179 (GHGGYLSCCRFLDDNQIVTSSGDMSCGLWDIETGLQVTS), 182–221 (GHTGDVMALSLAPQCKTFVSGACDASAKLWDIREGVCKQT), 224–263 (GHESDINAVTFFPNGQAFATGSDDATCRLFDIRADQELAM), 268–307 (NIICGITSVAFSKSGRLLLAGYDDFNCNVWDTMKAERSGI), and 310–340 (GHDNRVSCLGVTENGMAVATGSWDSFLRVWN).

The protein belongs to the WD repeat G protein beta family. In terms of assembly, g proteins are composed of 3 units, alpha, beta and gamma. Expressed in the brain neuropil and cortex, and the thoracic ganglion (at protein level). Expression detected in eye at protein level but not at mRNA level, suggesting cross reactivity of antibodies to the similar Gbeta76C protein.

Its function is as follows. Guanine nucleotide-binding proteins (G proteins) are involved as a modulator or transducer in various transmembrane signaling systems. The beta and gamma chains are required for the GTPase activity, for replacement of GDP by GTP, and for G protein-effector interaction. In Drosophila melanogaster (Fruit fly), this protein is Guanine nucleotide-binding protein subunit beta-1 (Gbeta13F).